The sequence spans 202 residues: Putative 3-methyladenine DNA glycosylase (202 aa).

It belongs to the DNA glycosylase MPG family.

The polypeptide is Putative 3-methyladenine DNA glycosylase (Staphylococcus haemolyticus (strain JCSC1435)).